Here is a 392-residue protein sequence, read N- to C-terminus: ATP-dependent RNA helicase eIF4A (392 aa).

The Q motif motif lies at 19-47 (DTFDDMNLKPELLRGIYAYGFERPSAIQQ). Positions 50 to 220 (IMPILGERDV…TKFMRDPIRI (171 aa)) constitute a Helicase ATP-binding domain. 63 to 70 (AQSGTGKT) serves as a coordination point for ATP. S65 is subject to Phosphoserine. Residues 168–171 (DEAD) carry the DEAD box motif. The region spanning 231–392 (GIKQFYVAVE…EMPMNIADLI (162 aa)) is the Helicase C-terminal domain.

This sequence belongs to the DEAD box helicase family. eIF4A subfamily. As to quaternary structure, component of the eIF4F complex, which composition varies with external and internal environmental conditions. It is composed of at least eIF4A, eIF4E and eIF4G.

The protein resides in the cytoplasm. The catalysed reaction is ATP + H2O = ADP + phosphate + H(+). In terms of biological role, ATP-dependent RNA helicase which is a subunit of the eIF4F complex involved in cap recognition and is required for mRNA binding to ribosome. In the current model of translation initiation, eIF4A unwinds RNA secondary structures in the 5'-UTR of mRNAs which is necessary to allow efficient binding of the small ribosomal subunit, and subsequent scanning for the initiator codon. In Schizosaccharomyces pombe (strain 972 / ATCC 24843) (Fission yeast), this protein is ATP-dependent RNA helicase eIF4A (tif1).